Reading from the N-terminus, the 173-residue chain is Acireductone dioxygenase (173 aa).

The tract at residues 1 to 20 (MKVYEYDNSTEDQREDHDSG) is disordered. Fe(2+) contacts are provided by His81, His83, Glu87, and His126. The Ni(2+) site is built by His81, His83, Glu87, and His126.

This sequence belongs to the acireductone dioxygenase (ARD) family. The cofactor is Fe(2+). It depends on Ni(2+) as a cofactor.

The protein resides in the cytoplasm. It is found in the nucleus. The catalysed reaction is 1,2-dihydroxy-5-(methylsulfanyl)pent-1-en-3-one + O2 = 4-methylsulfanyl-2-oxobutanoate + formate + 2 H(+). It catalyses the reaction 1,2-dihydroxy-5-(methylsulfanyl)pent-1-en-3-one + O2 = 3-(methylsulfanyl)propanoate + CO + formate + 2 H(+). Its pathway is amino-acid biosynthesis; L-methionine biosynthesis via salvage pathway; L-methionine from S-methyl-5-thio-alpha-D-ribose 1-phosphate: step 5/6. In terms of biological role, catalyzes 2 different reactions between oxygen and the acireductone 1,2-dihydroxy-3-keto-5-methylthiopentene (DHK-MTPene) depending upon the metal bound in the active site. Fe-containing acireductone dioxygenase (Fe-ARD) produces formate and 2-keto-4-methylthiobutyrate (KMTB), the alpha-ketoacid precursor of methionine in the methionine recycle pathway. Ni-containing acireductone dioxygenase (Ni-ARD) produces methylthiopropionate, carbon monoxide and formate, and does not lie on the methionine recycle pathway. The protein is Acireductone dioxygenase of Tuber melanosporum (strain Mel28) (Perigord black truffle).